Consider the following 165-residue polypeptide: uncharacterized protein (165 aa).

Residues 51–102 (KQAAVEPGARGGERPTGSQAGVTDTPDSAPFQRRSRAPRAREQAAQAGLNQK) form a disordered region. A compositionally biased stretch (polar residues) spans 66 to 76 (TGSQAGVTDTP).

This is an uncharacterized protein from Mus musculus (Mouse).